The following is a 145-amino-acid chain: Immune protein Tsi3 (145 aa).

The first 15 residues, 1-15, serve as a signal peptide directing secretion; sequence MKTVALILASLALLA. The N-palmitoyl cysteine moiety is linked to residue cysteine 16. Cysteine 16 carries S-diacylglycerol cysteine lipidation. The segment at 53-85 is disordered; it reads FDEGGKLRNPRQLEVQRQDAPPPPDLASRRLGD. Residue glutamate 126 coordinates Ca(2+).

In terms of assembly, forms a heterotetramer with Tse3 consisting of two Tse3 dimers and two Tsi3 dimers. Formation of the complex inactivates Tse3 enzymatic activity.

In terms of biological role, immunity protein that plays a role in preventing early activation of toxin Tse3. Occupies Tse3 substrate binding site and prevents the substrate from entering. This is Immune protein Tsi3 from Pseudomonas aeruginosa (strain ATCC 15692 / DSM 22644 / CIP 104116 / JCM 14847 / LMG 12228 / 1C / PRS 101 / PAO1).